A 274-amino-acid chain; its full sequence is MEEKVSTLTLRKFKKEGRKITALTAYDFPTAKILDNCGIDMILVGDSLGMVVLGYESTIPVTMEDMIHHTKAVSRAVNRAFIVADMPFMSYHISKEQAMTNAARLIAEGGAHAVKLEGGEEIASIVKAIVDAGIPVVGHLGLTPQSVHQLGGYKVQGKEKEQAKKIFNDAKVLEQAGICALVLESIPMELAKNITENISVPTIGIGAGPYCDGQILVTHDMLGITQGHRPKFVKQYADIEKIMIDGINAYIKEVQQVLFPDEEHSFTLEKRENK.

The Mg(2+) site is built by D46 and D85. Residues D46–S47, D85, and K115 each bind 3-methyl-2-oxobutanoate. E117 provides a ligand contact to Mg(2+). The active-site Proton acceptor is E184.

Belongs to the PanB family. In terms of assembly, homodecamer; pentamer of dimers. It depends on Mg(2+) as a cofactor.

The protein localises to the cytoplasm. It carries out the reaction 3-methyl-2-oxobutanoate + (6R)-5,10-methylene-5,6,7,8-tetrahydrofolate + H2O = 2-dehydropantoate + (6S)-5,6,7,8-tetrahydrofolate. It participates in cofactor biosynthesis; (R)-pantothenate biosynthesis; (R)-pantoate from 3-methyl-2-oxobutanoate: step 1/2. Functionally, catalyzes the reversible reaction in which hydroxymethyl group from 5,10-methylenetetrahydrofolate is transferred onto alpha-ketoisovalerate to form ketopantoate. The polypeptide is 3-methyl-2-oxobutanoate hydroxymethyltransferase (Thermoanaerobacter pseudethanolicus (strain ATCC 33223 / 39E) (Clostridium thermohydrosulfuricum)).